The chain runs to 798 residues: Phenylalanine--tRNA ligase beta subunit (798 aa).

The tRNA-binding domain maps to 39 to 148 (FDAIEPIVVG…ESFRIGARLV (110 aa)). The B5 domain maps to 402 to 478 (WQAPVLRFRR…RVRGMDTIEP (77 aa)). Residues aspartate 456, aspartate 462, glutamate 465, and glutamate 466 each coordinate Mg(2+). One can recognise an FDX-ACB domain in the interval 708–798 (PVYPPVRRDI…SLVEKLPVRI (91 aa)).

Belongs to the phenylalanyl-tRNA synthetase beta subunit family. Type 1 subfamily. In terms of assembly, tetramer of two alpha and two beta subunits. Mg(2+) serves as cofactor.

The protein resides in the cytoplasm. It catalyses the reaction tRNA(Phe) + L-phenylalanine + ATP = L-phenylalanyl-tRNA(Phe) + AMP + diphosphate + H(+). The chain is Phenylalanine--tRNA ligase beta subunit from Nitratidesulfovibrio vulgaris (strain ATCC 29579 / DSM 644 / CCUG 34227 / NCIMB 8303 / VKM B-1760 / Hildenborough) (Desulfovibrio vulgaris).